Reading from the N-terminus, the 666-residue chain is MRKINLLDLETTNKIAAGEVIERPFSVVKELVENSIDAGAKNITIEIEDGGQKLIKIIDDGEGIYPIDIKNAFLPHATSKINSIEDIYKISTMGFRGEALASISSVSKTKLKSRVDSYNFGKEIYIEGGKIEYLKDTGCNVGTTIEVSDLFYNVPARLKFLKSARSDSSSISDIVNRFILAHPDISFNLINKGKQSIKSYGTGNLKDSIRCVYNKTISENLINFESHKDIISVYGFIGKPEISRKSRTNQSIFVNKRYVKSKFITAAVENAFKSFLTVNSYPFFVIFIDIFPEYIDVNVHPTKSEVKFKDERAMFKTIFDAVHEAIKGELKESFTNFFNKEDINIYDSEKSIAETIKLEKEEVQIPIDLNSNNKIDIFGNNINKLPTNTEVLKNIGIKEKNILENNDNFYTSKQNEIYYTNKNDEYLNSCNKDDYSKIEKPLQKGNKNPDALYLNEHNTNSSSINIKENKSNNFYVDMKIIGQFNNTYILIEKDKELYIIDQHAAHEKVLFEKFKSEIEKGYVISQILLSPVVIELSEDEFNIYEENKDIFKNSGFAVENFGESTINIKEVPLILGKPNVENLFMDILYNLKNMKSKETSTIKYNAIATLACKSAVKANDNLKEEEIKKLIEDMLILNNPYTCPHGRPTMIKFTLKDLEKKFKRIQ.

Belongs to the DNA mismatch repair MutL/HexB family.

Its function is as follows. This protein is involved in the repair of mismatches in DNA. It is required for dam-dependent methyl-directed DNA mismatch repair. May act as a 'molecular matchmaker', a protein that promotes the formation of a stable complex between two or more DNA-binding proteins in an ATP-dependent manner without itself being part of a final effector complex. This Clostridium botulinum (strain Loch Maree / Type A3) protein is DNA mismatch repair protein MutL.